The primary structure comprises 469 residues: tRNA-2-methylthio-N(6)-dimethylallyladenosine synthase (469 aa).

The MTTase N-terminal domain occupies 27–142 (KKVYIRTFGC…LPQMLAQRAR (116 aa)). Residues Cys-36, Cys-73, Cys-105, Cys-179, Cys-183, and Cys-186 each contribute to the [4Fe-4S] cluster site. Residues 165 to 398 (KVDGAAAFVS…QATIEDNVRR (234 aa)) enclose the Radical SAM core domain. The TRAM domain occupies 401–467 (ERRVGTVQRV…PHSLRGEPVL (67 aa)).

Belongs to the methylthiotransferase family. MiaB subfamily. As to quaternary structure, monomer. Requires [4Fe-4S] cluster as cofactor.

Its subcellular location is the cytoplasm. The enzyme catalyses N(6)-dimethylallyladenosine(37) in tRNA + (sulfur carrier)-SH + AH2 + 2 S-adenosyl-L-methionine = 2-methylsulfanyl-N(6)-dimethylallyladenosine(37) in tRNA + (sulfur carrier)-H + 5'-deoxyadenosine + L-methionine + A + S-adenosyl-L-homocysteine + 2 H(+). Functionally, catalyzes the methylthiolation of N6-(dimethylallyl)adenosine (i(6)A), leading to the formation of 2-methylthio-N6-(dimethylallyl)adenosine (ms(2)i(6)A) at position 37 in tRNAs that read codons beginning with uridine. The polypeptide is tRNA-2-methylthio-N(6)-dimethylallyladenosine synthase (Leptothrix cholodnii (strain ATCC 51168 / LMG 8142 / SP-6) (Leptothrix discophora (strain SP-6))).